The primary structure comprises 302 residues: Nucleotide-binding protein Bmul_0520/BMULJ_02739 (302 aa).

Residue 8–15 participates in ATP binding; that stretch reads GISGSGKS. 57–60 contributes to the GTP binding site; sequence DARS.

Belongs to the RapZ-like family.

Functionally, displays ATPase and GTPase activities. This Burkholderia multivorans (strain ATCC 17616 / 249) protein is Nucleotide-binding protein Bmul_0520/BMULJ_02739.